Here is a 574-residue protein sequence, read N- to C-terminus: Alpha-farnesene synthase (574 aa).

Residues Asp326, Asp330, and Glu478 each coordinate Mn(2+). The DDXXD motif signature appears at 326–330; it reads DDIYD.

Belongs to the terpene synthase family. Tpsd subfamily. Requires Mn(2+) as cofactor.

The protein localises to the cytoplasm. The catalysed reaction is (2E,6E)-farnesyl diphosphate = (3E,6E)-alpha-farnesene + diphosphate. The protein operates within terpene metabolism; oleoresin biosynthesis. Its function is as follows. Involved in sesquiterpene (C15) biosynthesis. The major product is alpha-farnesene. This chain is Alpha-farnesene synthase (PT5), found in Pinus taeda (Loblolly pine).